The primary structure comprises 628 residues: Neutral/alkaline invertase 1, mitochondrial (628 aa).

The transit peptide at 1-35 directs the protein to the mitochondrion; that stretch reads MAAAAISHLRRGAPRHARALLYLSTRRFSSSSAAG. Residues 79-90 show a composition bias toward low complexity; sequence ASSAPPLESPPI. The disordered stretch occupies residues 79–113; it reads ASSAPPLESPPIEELPDDATPPPEEEPGLPAPEKD.

Belongs to the glycosyl hydrolase 100 family. In terms of tissue distribution, expressed in roots, leaf and stems.

It localises to the mitochondrion. It catalyses the reaction Hydrolysis of terminal non-reducing beta-D-fructofuranoside residues in beta-D-fructofuranosides.. Mitochondrial invertase that cleaves sucrose into glucose and fructose. This is Neutral/alkaline invertase 1, mitochondrial from Oryza sativa subsp. japonica (Rice).